Reading from the N-terminus, the 312-residue chain is MSHSNNFYRLETRLQSQTGKAIGDFGMIEDGDTVLVCMSGGKDSYTMLSVLMALQKRAPIQFKLIAMNLDQKQPGFPEHVLPEYLKSTGVEYVIVEADTYSIVKEKVPEGKTTCSLCSRLRRGVIYRTAKELGANKIALGHHRDDIVNTFFLNMFFGGKMKAMPPKLATDDGAHIVIRPLAYCSEKDIAAYARAMEFPIIPCNLCGSQENLQRKKVSEMLQAWERENPGRIDNIFASLRNVVPSHLADTDLFPFTGLATGLAKVDEASLFGETTFTQQPLVFAGSSDENRLEFVRFERPPQTSATVQQASIE.

The PP-loop motif signature appears at 39–44 (SGGKDS). Cys114, Cys117, and Cys205 together coordinate [4Fe-4S] cluster.

Belongs to the TtcA family. As to quaternary structure, homodimer. Mg(2+) is required as a cofactor. [4Fe-4S] cluster serves as cofactor.

The protein resides in the cytoplasm. The catalysed reaction is cytidine(32) in tRNA + S-sulfanyl-L-cysteinyl-[cysteine desulfurase] + AH2 + ATP = 2-thiocytidine(32) in tRNA + L-cysteinyl-[cysteine desulfurase] + A + AMP + diphosphate + H(+). Its pathway is tRNA modification. Catalyzes the ATP-dependent 2-thiolation of cytidine in position 32 of tRNA, to form 2-thiocytidine (s(2)C32). The sulfur atoms are provided by the cysteine/cysteine desulfurase (IscS) system. In Cupriavidus pinatubonensis (strain JMP 134 / LMG 1197) (Cupriavidus necator (strain JMP 134)), this protein is tRNA-cytidine(32) 2-sulfurtransferase.